The primary structure comprises 37 residues: Large ribosomal subunit protein bL36 (37 aa).

It belongs to the bacterial ribosomal protein bL36 family.

This Leptospira interrogans serogroup Icterohaemorrhagiae serovar copenhageni (strain Fiocruz L1-130) protein is Large ribosomal subunit protein bL36.